The following is a 333-amino-acid chain: MKTIYILSIGKLYRGKNGLYFINKDKKKSPIPLESIKEIFILNKVSVTYNALKLLADRNIPIHFFYENTKKGISYYLGSFLPRQKTKSGLVLVKQVEAYKDIEKRTEIALEIVDAIRYNCIKVLEKYHIDEVKELRKIDVWKMFEESLNDWKDAINIIRGIESNIWNLFYQGLDKILKLYKLERRTRRPPKNEANTIVSFANTLLYGVTLTEIYKTHLDPTISFLHELRDTRYSLALDLSENFKPIITFRILIWLVNQGIIKDTHFVKGLNGVLLNEQGKKLVIKEFNKRLDETIKLKSGLKRSMRWYIKAQAYNLERFLLDGRKFKAFRLIY.

Mn(2+) is bound by residues glutamate 162, histidine 226, and glutamate 241.

It belongs to the CRISPR-associated endonuclease Cas1 family. Homodimer, forms a heterotetramer with a Cas2 homodimer. Mg(2+) serves as cofactor. It depends on Mn(2+) as a cofactor.

Its function is as follows. CRISPR (clustered regularly interspaced short palindromic repeat), is an adaptive immune system that provides protection against mobile genetic elements (viruses, transposable elements and conjugative plasmids). CRISPR clusters contain spacers, sequences complementary to antecedent mobile elements, and target invading nucleic acids. CRISPR clusters are transcribed and processed into CRISPR RNA (crRNA). Acts as a dsDNA endonuclease. Involved in the integration of spacer DNA into the CRISPR cassette. The chain is CRISPR-associated endonuclease Cas1 from Nanoarchaeum equitans (strain Kin4-M).